We begin with the raw amino-acid sequence, 345 residues long: NADPH dehydrogenase (345 aa).

23 to 26 contributes to the FMN binding site; sequence SPMC. Position 28 (Tyr-28) interacts with substrate. 2 residues coordinate FMN: Ala-60 and Gln-102. Substrate is bound at residue 164–167; sequence HGAH. FMN contacts are provided by residues Arg-215 and 307-308; that span reads GR.

The protein belongs to the NADH:flavin oxidoreductase/NADH oxidase family. NamA subfamily. In terms of assembly, homotetramer. It depends on FMN as a cofactor.

It carries out the reaction A + NADPH + H(+) = AH2 + NADP(+). Functionally, catalyzes the reduction of the double bond of an array of alpha,beta-unsaturated aldehydes and ketones. It also reduces the nitro group of nitroester and nitroaromatic compounds. It could have a role in detoxification processes. This Bacillus thuringiensis subsp. konkukian (strain 97-27) protein is NADPH dehydrogenase.